Consider the following 391-residue polypeptide: Processive diacylglycerol beta-glucosyltransferase (391 aa).

The protein belongs to the glycosyltransferase 28 family. UgtP subfamily.

It localises to the cell membrane. The enzyme catalyses a 1,2-diacyl-3-O-(beta-D-glucopyranosyl)-sn-glycerol + UDP-alpha-D-glucose = a 1,2-diacyl-3-O-(beta-D-Glc-(1-&gt;6)-beta-D-Glc)-sn-glycerol + UDP + H(+). The catalysed reaction is a 1,2-diacyl-sn-glycerol + UDP-alpha-D-glucose = a 1,2-diacyl-3-O-(beta-D-glucopyranosyl)-sn-glycerol + UDP + H(+). The protein operates within glycolipid metabolism; diglucosyl-diacylglycerol biosynthesis. Processive glucosyltransferase involved in the biosynthesis of both the bilayer- and non-bilayer-forming membrane glucolipids. Is able to successively transfer two glucosyl residues to diacylglycerol (DAG), thereby catalyzing the formation of beta-monoglucosyl-DAG (3-O-(beta-D-glucopyranosyl)-1,2-diacyl-sn-glycerol) and beta-diglucosyl-DAG (3-O-(beta-D-glucopyranosyl-beta-(1-&gt;6)-D-glucopyranosyl)-1,2-diacyl-sn-glycerol). Beta-diglucosyl-DAG is the predominant glycolipid found in Bacillales and is also used as a membrane anchor for lipoteichoic acid (LTA). This Staphylococcus epidermidis (strain ATCC 35984 / DSM 28319 / BCRC 17069 / CCUG 31568 / BM 3577 / RP62A) protein is Processive diacylglycerol beta-glucosyltransferase.